A 203-amino-acid polypeptide reads, in one-letter code: Endo-type membrane-bound lytic murein transglycosylase A (203 aa).

The first 15 residues, 1 to 15 (MKLRWFAFLVVLLAG), serve as a signal peptide directing secretion. Cys16 carries the N-palmitoyl cysteine lipid modification. Cys16 carries the S-diacylglycerol cysteine lipid modification.

The protein belongs to the transglycosylase Slt family.

Its subcellular location is the cell outer membrane. The enzyme catalyses Endolytic cleavage of the (1-&gt;4)-beta-glycosidic linkage between N-acetylmuramic acid (MurNAc) and N-acetylglucosamine (GlcNAc) residues in peptidoglycan with concomitant formation of a 1,6-anhydrobond in the MurNAc residue.. Its function is as follows. Murein-degrading enzyme. May play a role in recycling of muropeptides during cell elongation and/or cell division. Preferentially cleaves at a distance of more than two disaccharide units from the ends of the glycan chain. This chain is Endo-type membrane-bound lytic murein transglycosylase A, found in Escherichia fergusonii (strain ATCC 35469 / DSM 13698 / CCUG 18766 / IAM 14443 / JCM 21226 / LMG 7866 / NBRC 102419 / NCTC 12128 / CDC 0568-73).